The sequence spans 304 residues: Choline-phosphate cytidylyltransferase 2 (304 aa).

Residues 28-36 and lysine 66 contribute to the CTP site; that span reads IFDLFHFGH. Substrate-binding residues include lysine 66 and tryptophan 95. CTP is bound by residues 112-113, tyrosine 117, and 142-146; these read HD and RTEGI. The segment at 266 to 292 is disordered; sequence QNGLTISKDNDDEQMSDDNEFAEEDCV. Over residues 275 to 291 the composition is skewed to acidic residues; the sequence is NDDEQMSDDNEFAEEDC.

Belongs to the cytidylyltransferase family.

It catalyses the reaction phosphocholine + CTP + H(+) = CDP-choline + diphosphate. It functions in the pathway phospholipid metabolism; phosphatidylcholine biosynthesis; phosphatidylcholine from phosphocholine: step 1/2. Functionally, plays an important role in the biosynthesis of the phospholipid phosphatidylcholine. Catalyzes the formation of CDP-choline. The protein is Choline-phosphate cytidylyltransferase 2 of Arabidopsis thaliana (Mouse-ear cress).